We begin with the raw amino-acid sequence, 338 residues long: MKVYYDKDCDLSIIQGKKVAIIGYGSQGHAQACNLKDSGVDVTVGLRKGSATVAKAEAHGLKVTDVASAVAAADLVMILTPDEFQSALYKNEIEPNIKKGATLAFSHGFAIHYNQVVPRADLDVIMIAPKAPGHTVRSEFVKGGGIPDLIAIYQDASGNAKNVALSYAAGVGGGRTGIIETTFKDETETDLFGEQAVLCGGTVELVKAGFETLVEAGYAPEMAYFECLHELKLIVDLMYEGGIANMNYSISNNAEYGEYVTGPEVINAESRQAMRNALKRIQDGEYAKMFISEGATGYPSMTAKRRNNAAHGIEVIGEQLRSMMPWIGANKIVDKAKN.

The KARI N-terminal Rossmann domain occupies Met-1 to Thr-181. NADP(+) is bound by residues Tyr-24–Gln-27, Arg-47, Ser-50, Thr-52, and Asp-82–Gln-85. His-107 is a catalytic residue. Gly-133 contributes to the NADP(+) binding site. The KARI C-terminal knotted domain maps to Thr-182–Ile-327. The Mg(2+) site is built by Asp-190, Glu-194, Glu-226, and Glu-230. Substrate is bound at residue Ser-251.

It belongs to the ketol-acid reductoisomerase family. The cofactor is Mg(2+).

The enzyme catalyses (2R)-2,3-dihydroxy-3-methylbutanoate + NADP(+) = (2S)-2-acetolactate + NADPH + H(+). It carries out the reaction (2R,3R)-2,3-dihydroxy-3-methylpentanoate + NADP(+) = (S)-2-ethyl-2-hydroxy-3-oxobutanoate + NADPH + H(+). The protein operates within amino-acid biosynthesis; L-isoleucine biosynthesis; L-isoleucine from 2-oxobutanoate: step 2/4. It participates in amino-acid biosynthesis; L-valine biosynthesis; L-valine from pyruvate: step 2/4. Functionally, involved in the biosynthesis of branched-chain amino acids (BCAA). Catalyzes an alkyl-migration followed by a ketol-acid reduction of (S)-2-acetolactate (S2AL) to yield (R)-2,3-dihydroxy-isovalerate. In the isomerase reaction, S2AL is rearranged via a Mg-dependent methyl migration to produce 3-hydroxy-3-methyl-2-ketobutyrate (HMKB). In the reductase reaction, this 2-ketoacid undergoes a metal-dependent reduction by NADPH to yield (R)-2,3-dihydroxy-isovalerate. The protein is Ketol-acid reductoisomerase (NADP(+)) of Pseudomonas fluorescens (strain SBW25).